A 229-amino-acid polypeptide reads, in one-letter code: Putative N-acetylmannosamine-6-phosphate 2-epimerase (229 aa).

This sequence belongs to the NanE family.

It carries out the reaction an N-acyl-D-glucosamine 6-phosphate = an N-acyl-D-mannosamine 6-phosphate. It functions in the pathway amino-sugar metabolism; N-acetylneuraminate degradation; D-fructose 6-phosphate from N-acetylneuraminate: step 3/5. Its function is as follows. Converts N-acetylmannosamine-6-phosphate (ManNAc-6-P) to N-acetylglucosamine-6-phosphate (GlcNAc-6-P). This chain is Putative N-acetylmannosamine-6-phosphate 2-epimerase, found in Haemophilus ducreyi (strain 35000HP / ATCC 700724).